Reading from the N-terminus, the 588-residue chain is 2-isopropylmalate synthase (588 aa).

In terms of domain architecture, Pyruvate carboxyltransferase spans 40 to 314 (PRWCAVDLRD…DPQIDFSDLD (275 aa)). Positions 49, 253, 255, and 289 each coordinate Mg(2+). Residues 456–588 (APLDRVEEKW…TVREPELAAV (133 aa)) form a regulatory domain region.

It belongs to the alpha-IPM synthase/homocitrate synthase family. LeuA type 2 subfamily. As to quaternary structure, homodimer. The cofactor is Mg(2+).

It localises to the cytoplasm. The enzyme catalyses 3-methyl-2-oxobutanoate + acetyl-CoA + H2O = (2S)-2-isopropylmalate + CoA + H(+). The protein operates within amino-acid biosynthesis; L-leucine biosynthesis; L-leucine from 3-methyl-2-oxobutanoate: step 1/4. Functionally, catalyzes the condensation of the acetyl group of acetyl-CoA with 3-methyl-2-oxobutanoate (2-ketoisovalerate) to form 3-carboxy-3-hydroxy-4-methylpentanoate (2-isopropylmalate). This Clavibacter sepedonicus (Clavibacter michiganensis subsp. sepedonicus) protein is 2-isopropylmalate synthase.